A 345-amino-acid chain; its full sequence is Phosphate acyltransferase (345 aa).

Belongs to the PlsX family. As to quaternary structure, homodimer. Probably interacts with PlsY.

The protein localises to the cytoplasm. It carries out the reaction a fatty acyl-[ACP] + phosphate = an acyl phosphate + holo-[ACP]. It functions in the pathway lipid metabolism; phospholipid metabolism. In terms of biological role, catalyzes the reversible formation of acyl-phosphate (acyl-PO(4)) from acyl-[acyl-carrier-protein] (acyl-ACP). This enzyme utilizes acyl-ACP as fatty acyl donor, but not acyl-CoA. This is Phosphate acyltransferase from Trichlorobacter lovleyi (strain ATCC BAA-1151 / DSM 17278 / SZ) (Geobacter lovleyi).